A 206-amino-acid chain; its full sequence is Large ribosomal subunit protein bL25 (206 aa).

A disordered region spans residues 168 to 206; the sequence is DPEESVVTVEVPEDASESTAAPEAAAPAADAAAPAADAK. Over residues 184–206 the composition is skewed to low complexity; that stretch reads ESTAAPEAAAPAADAAAPAADAK.

The protein belongs to the bacterial ribosomal protein bL25 family. CTC subfamily. Part of the 50S ribosomal subunit; part of the 5S rRNA/L5/L18/L25 subcomplex. Contacts the 5S rRNA. Binds to the 5S rRNA independently of L5 and L18.

Its function is as follows. This is one of the proteins that binds to the 5S RNA in the ribosome where it forms part of the central protuberance. In Bifidobacterium longum (strain DJO10A), this protein is Large ribosomal subunit protein bL25.